The primary structure comprises 159 residues: Trafficking protein particle complex subunit 6A (159 aa).

At serine 33 the chain carries Phosphoserine.

The protein belongs to the TRAPP small subunits family. BET3 subfamily. In terms of assembly, part of the multisubunit transport protein particle (TRAPP) complex. Heterodimer with TRAPPC3. The heterodimer TRAPPC3-TRAPPC6A interacts with TRAPPC2L. Interacts with TRAPPC2L. Ubiquitous, with lowest expression in skeletal muscle and brain and highest in kidney, liver and testis, as well as in cultured melanocytes.

It is found in the golgi apparatus. The protein resides in the cis-Golgi network. Its subcellular location is the endoplasmic reticulum. In terms of biological role, may play a role in vesicular transport during the biogenesis of melanosomes. The protein is Trafficking protein particle complex subunit 6A of Mus musculus (Mouse).